We begin with the raw amino-acid sequence, 182 residues long: Adenylate kinase (182 aa).

12–17 (GAGKGT) is an ATP binding site. Residues 32-61 (STGDLLREEVSGGTDLGKKAELIMNKGELV) are NMP. AMP-binding positions include T33, R38, 59–61 (ELV), 85–88 (GFPR), and Q92. The segment at 126 to 132 (GRGRKDD) is LID. R127 lines the ATP pocket. AMP contacts are provided by R129 and R140. G168 contributes to the ATP binding site.

The protein belongs to the adenylate kinase family. As to quaternary structure, monomer.

Its subcellular location is the cytoplasm. The catalysed reaction is AMP + ATP = 2 ADP. It participates in purine metabolism; AMP biosynthesis via salvage pathway; AMP from ADP: step 1/1. Functionally, catalyzes the reversible transfer of the terminal phosphate group between ATP and AMP. Plays an important role in cellular energy homeostasis and in adenine nucleotide metabolism. The protein is Adenylate kinase of Prochlorococcus marinus (strain SARG / CCMP1375 / SS120).